The sequence spans 163 residues: C-type lectin lectoxin-Lio2 (163 aa).

The signal sequence occupies residues methionine 1–alanine 21. 3 disulfides stabilise this stretch: cysteine 25-cysteine 36, cysteine 53-cysteine 152, and cysteine 127-cysteine 144. The region spanning serine 32 to lysine 153 is the C-type lectin domain. The short motif at glutamate 117–asparagine 119 is the Mannose-binding element. Residues glutamate 125 and aspartate 141 each contribute to the Ca(2+) site.

Belongs to the true venom lectin family. As to expression, expressed by the venom gland.

Its subcellular location is the secreted. In terms of biological role, mannose-binding lectin which recognizes specific carbohydrate structures and agglutinates a variety of animal cells by binding to cell-surface glycoproteins and glycolipids. May be a calcium-dependent lectin. The sequence is that of C-type lectin lectoxin-Lio2 from Erythrolamprus poecilogyrus (Water snake).